Here is a 225-residue protein sequence, read N- to C-terminus: Cytidylate kinase (225 aa).

10-18 serves as a coordination point for ATP; the sequence is GPASSGKST.

Belongs to the cytidylate kinase family. Type 1 subfamily.

It is found in the cytoplasm. The catalysed reaction is CMP + ATP = CDP + ADP. The enzyme catalyses dCMP + ATP = dCDP + ADP. This is Cytidylate kinase from Streptococcus sanguinis (strain SK36).